We begin with the raw amino-acid sequence, 522 residues long: Serine/threonine-protein kinase BSK1-2 (522 aa).

Residues 1–54 (MGCCGSSLRVGSHAPEKPPRRARPPPPPPQPHHPRRPSFTLNAHQAAASSSAAS) are disordered. The N-myristoyl glycine moiety is linked to residue Gly-2. The Protein kinase domain occupies 79–338 (ANIVSESGEK…KLVSILQPLQ (260 aa)). ATP contacts are provided by residues 85-93 (SGEKAPNLV) and Lys-111. The active-site Proton acceptor is Asp-205.

This sequence belongs to the protein kinase superfamily. Ser/Thr protein kinase family.

Its subcellular location is the cell membrane. It catalyses the reaction L-seryl-[protein] + ATP = O-phospho-L-seryl-[protein] + ADP + H(+). The enzyme catalyses L-threonyl-[protein] + ATP = O-phospho-L-threonyl-[protein] + ADP + H(+). Functionally, probable serine/threonine kinase that functions as a positive regulator of plant immunity. May be involved in the regulation of pattern-triggered immunity (PTI). Does not seem to be involved in responses to brassinosteroid (BR) signaling. This chain is Serine/threonine-protein kinase BSK1-2, found in Oryza sativa subsp. japonica (Rice).